Reading from the N-terminus, the 356-residue chain is Acyl-coenzyme A diphosphatase NUDT19 (356 aa).

One can recognise a Nudix hydrolase domain in the interval alanine 10–glutamate 241. The interval proline 72–alanine 94 is disordered. The span at proline 78 to proline 87 shows a compositional bias: pro residues. A Nudix box motif is present at residues alanine 97–glycine 118. Residues glutamate 112 and glutamate 116 each contribute to the Mg(2+) site. The residue at position 299 (lysine 299) is an N6-succinyllysine. The Microbody targeting signal signature appears at alanine 354 to leucine 356.

The protein belongs to the Nudix hydrolase family. In terms of assembly, monomer. Mg(2+) serves as cofactor. It depends on Mn(2+) as a cofactor.

The protein resides in the peroxisome. It catalyses the reaction an acyl-CoA + H2O = an acyl-4'-phosphopantetheine + adenosine 3',5'-bisphosphate + 2 H(+). The enzyme catalyses CoA + H2O = (R)-4'-phosphopantetheine + adenosine 3',5'-bisphosphate + 2 H(+). It carries out the reaction hexanoyl-CoA + H2O = hexanoyl-4'-phosphopantetheine + adenosine 3',5'-bisphosphate + 2 H(+). The catalysed reaction is octanoyl-CoA + H2O = S-octanoyl-4'-phosphopantetheine + adenosine 3',5'-bisphosphate + 2 H(+). It catalyses the reaction butanoyl-CoA + H2O = S-butanoyl-4'-phosphopantetheine + adenosine 3',5'-bisphosphate + 2 H(+). The enzyme catalyses propanoyl-CoA + H2O = propanoyl-4'-phosphopantetheine + adenosine 3',5'-bisphosphate + 2 H(+). It carries out the reaction malonyl-CoA + H2O = malonyl-4'-phosphopantetheine + adenosine 3',5'-bisphosphate + 2 H(+). The catalysed reaction is succinyl-CoA + H2O = succinyl-4'-phosphopantetheine + adenosine 3',5'-bisphosphate + 2 H(+). It catalyses the reaction choloyl-CoA + H2O = S-choloyl-4'-phosphopantetheine + adenosine 3',5'-bisphosphate + 2 H(+). The enzyme catalyses 4,8-dimethylnonanoyl-CoA + H2O = S-(4,8-dimethylnonanoyl)-4'-phosphopantetheine + adenosine 3',5'-bisphosphate + 2 H(+). It carries out the reaction (9Z,12Z,15Z)-octadecatrienoyl-CoA + H2O = S-(9Z,12Z,15Z-octadecatrienoyl)-4'-phosphopantetheine + adenosine 3',5'-bisphosphate + 2 H(+). The catalysed reaction is (9Z,12Z)-octadecadienoyl-CoA + H2O = S-(9Z,12Z-octadecadienoyl)-4'-phosphopantetheine + adenosine 3',5'-bisphosphate + 2 H(+). It catalyses the reaction (9Z)-hexadecenoyl-CoA + H2O = S-(9Z-hexadecenoyl)-4'-phosphopantetheine + adenosine 3',5'-bisphosphate + 2 H(+). The enzyme catalyses (9Z)-tetradecenoyl-CoA + H2O = S-(9Z-tetradecenoyl)-4'-phosphopantetheine + adenosine 3',5'-bisphosphate + 2 H(+). It carries out the reaction (6Z)-octenoyl-CoA + H2O = S-(6Z-octenoyl)-4'-phosphopantetheine + adenosine 3',5'-bisphosphate + 2 H(+). The catalysed reaction is hexadecanoyl-CoA + H2O = S-hexadecanoyl-4'-phosphopantetheine + adenosine 3',5'-bisphosphate + 2 H(+). It catalyses the reaction tetradecanoyl-CoA + H2O = tetradecanoyl-4'-phosphopantetheine + adenosine 3',5'-bisphosphate + 2 H(+). The enzyme catalyses dodecanoyl-CoA + H2O = S-dodecanoyl-4'-phosphopantetheine + adenosine 3',5'-bisphosphate + 2 H(+). It carries out the reaction a 5'-end CoA-ribonucleoside in mRNA + H2O = a 5'-end phospho-adenosine-phospho-ribonucleoside in mRNA + (R)-4'-phosphopantetheine + 2 H(+). In terms of biological role, fatty acyl-coenzyme A (CoA) diphosphatase that hydrolyzes fatty acyl-CoA to yield acyl-4'-phosphopantetheine and adenosine 3',5'-bisphosphate. Mediates the hydrolysis of a wide range of CoA esters, including choloyl-CoA and branched-chain fatty-acyl-CoA esters and at low substrate concentrations medium and long-chain fatty-acyl-CoA esters are the primary substrates. Highest activity seen with medium-chain acyl-CoA esters and higher rates of activity seen with the unsaturated acyl-CoA esters compared with the saturated esters. Exhibits decapping activity towards dpCoA-capped RNAs in vitro. The sequence is that of Acyl-coenzyme A diphosphatase NUDT19 (Nudt19) from Mus saxicola (Brown spiny mouse).